The following is an 84-amino-acid chain: Exodeoxyribonuclease 7 small subunit (84 aa).

This sequence belongs to the XseB family. Heterooligomer composed of large and small subunits.

The protein localises to the cytoplasm. It catalyses the reaction Exonucleolytic cleavage in either 5'- to 3'- or 3'- to 5'-direction to yield nucleoside 5'-phosphates.. In terms of biological role, bidirectionally degrades single-stranded DNA into large acid-insoluble oligonucleotides, which are then degraded further into small acid-soluble oligonucleotides. The protein is Exodeoxyribonuclease 7 small subunit of Bartonella quintana (strain Toulouse) (Rochalimaea quintana).